Consider the following 60-residue polypeptide: Hemocyte defensin Cg-Defh1 (60 aa).

The first 17 residues, 1–17 (LFTLVVLLMVSADMAFA), serve as a signal peptide directing secretion. Residues Phe-19, Gly-20, and Cys-21 each contribute to the beta-D-GlcNAc-(1-&gt;4)-Mur2Ac(oyl-L-Ala-gamma-D-Glu-L-Lys-D-Ala-D-Ala)-di-trans,octa-cis-undecaprenyl diphosphate site. 4 disulfides stabilise this stretch: Cys-21–Cys-42, Cys-28–Cys-51, Cys-32–Cys-53, and Cys-37–Cys-56. The binds to membrane interface stretch occupies residues 22 to 25 (PRDQ). His-31 contacts beta-D-GlcNAc-(1-&gt;4)-Mur2Ac(oyl-L-Ala-gamma-D-Glu-L-Lys-D-Ala-D-Ala)-di-trans,octa-cis-undecaprenyl diphosphate. A binds to membrane interface region spans residues 43-49 (DAVTLWL). Cys-51 contacts beta-D-GlcNAc-(1-&gt;4)-Mur2Ac(oyl-L-Ala-gamma-D-Glu-L-Lys-D-Ala-D-Ala)-di-trans,octa-cis-undecaprenyl diphosphate.

It belongs to the invertebrate defensin family. Expressed in hemocytes.

The protein resides in the secreted. It is found in the target cell membrane. Antibacterial peptide mostly active against Gram-positive bacteria. It acts by selectively inhibiting peptidoglycan biosynthesis through complex formation with the cell wall precursor lipid II (1:1 molar ratio) thus inhibiting cell wall synthesis. It does not disrupt cell membranes. Is noticeably less potent than Cg-Defh2 and Cg-Defm. Shows no or limited activities against Gram-negative bacteria. The protein is Hemocyte defensin Cg-Defh1 of Magallana gigas (Pacific oyster).